Consider the following 146-residue polypeptide: MTNSKNSSNNSTNGNELYAIAETSGQQFWFEVNRYYDIDRLNAKEKDKITLEKILLLKDKNSITIGKPYVKDAKIELEVVSHKRDKKILVYKMRPKKKTRRKMGHRQELTRVMVKSISLGKSAPKSSAKKETVKKETKPKSEKSTN.

The tract at residues Lys115–Asn146 is disordered. Positions Ala128–Asn146 are enriched in basic and acidic residues.

Belongs to the bacterial ribosomal protein bL21 family. Part of the 50S ribosomal subunit. Contacts protein L20.

Functionally, this protein binds to 23S rRNA in the presence of protein L20. The protein is Large ribosomal subunit protein bL21 of Prochlorococcus marinus (strain MIT 9312).